The sequence spans 579 residues: Transcription factor COE2 (579 aa).

Residues 63–66 (RKSN) form an interaction with DNA region. The segment at 149-168 (CRVLLTHEVMCSRCCEKKSC) adopts a C5-type zinc-finger fold. Interaction with DNA stretches follow at residues 195 to 202 (NCLKTAGN) and 234 to 237 (NNSK). An IPT/TIG domain is found at 260–343 (PCIKAISPSE…KGAPGRFIYT (84 aa)). Disordered regions lie at residues 442–482 (GVSI…YGSN), 514–533 (AIMP…LPFS), and 549–579 (LRPQ…VPPM). Polar residues predominate over residues 449-459 (GQTSGQGYTRN). 2 stretches are compositionally biased toward low complexity: residues 460–472 (SSSL…PSSS) and 521–533 (PGSS…LPFS).

Belongs to the COE family.

Its subcellular location is the nucleus. This chain is Transcription factor COE2 (coe2), found in Danio rerio (Zebrafish).